A 1006-amino-acid polypeptide reads, in one-letter code: Zinc finger protein ZFPM1 (1006 aa).

The span at 1–13 shows a compositional bias: basic residues; it reads MSRRKQSNPRQIK. Disordered stretches follow at residues 1–93 and 114–133; these read MSRR…DELE and SWGP…RQAE. Basic and acidic residues predominate over residues 15–25; that stretch reads SLGDMEAREEV. The segment covering 42 to 62 has biased composition (pro residues); that stretch reads APSPPSADVNSPPPLPPPTSP. Over residues 66-79 the composition is skewed to basic and acidic residues; sequence KELEGQEPEPRPTE. Phosphoserine is present on residues Ser-84 and Ser-128. The segment covering 121–130 has biased composition (polar residues); sequence SVQTRASSPR. A CCHC FOG-type 1 zinc finger spans residues 235 to 268; it reads VINKDVFPCKDCGIWYRSERNLQAHLLYYCASRQ. Positions 243, 246, 259, and 264 each coordinate Zn(2+). Ser-272 carries the phosphoserine modification. 3 consecutive C2H2-type zinc fingers follow at residues 290-314, 320-342, and 348-371; these read RVCP…MRSH, FVCL…LKVH, and GVCH…VTNH. Positions 330 to 341 are interaction with TACC3; it reads TTKANCERHLKV. Phosphoserine is present on Ser-384. Disordered stretches follow at residues 384 to 409, 438 to 460, and 473 to 515; these read SPGA…HTAL, NGEA…AAPR, and APIL…SPVP. A compositionally biased stretch (low complexity) spans 485–515; the sequence is APSRTPSPRSPAPARVKAELSSPTPGSSPVP. 2 positions are modified to phosphoserine: Ser-491 and Ser-494. Residues 571 to 604 form a CCHC FOG-type 2 zinc finger; the sequence is PGAPKGATCFECEITFSNVNNYYVHKRLYCSGRR. Residues Cys-579, Cys-582, His-595, and Cys-600 each contribute to the Zn(2+) site. Residues 605–681 form a disordered region; sequence APEDAPAARR…SVDDAEDDPS (77 aa). The segment covering 617-629 has biased composition (pro residues); sequence APPGPARAPPGQP. Phosphoserine occurs at positions 638 and 671. A CCHC FOG-type 3 zinc finger spans residues 677 to 710; that stretch reads EDDPSRTLCEACNIRFSRHETYTVHKRYYCASRH. Residues Cys-685, Cys-688, His-701, and Cys-706 each contribute to the Zn(2+) site. Residues 708–810 are disordered; the sequence is SRHDPPPRRP…PRRPLPGAPA (103 aa). 2 stretches are compositionally biased toward pro residues: residues 715–735 and 754–769; these read RRPA…PSPA and APPP…PESP. The segment covering 780–791 has biased composition (low complexity); the sequence is GLAPARSPGPAA. Ser-786 is subject to Phosphoserine. The interaction with CTBP2 stretch occupies residues 794-800; the sequence is PIDLSKK. Residues 811 to 844 form a CCHC FOG-type 4 zinc finger; the sequence is PALADYHECTACRVSFHSLEAYLAHKKYSCPAAP. Zn(2+) is bound by residues Cys-819, Cys-822, His-835, and Cys-840. A C2H2-type 4 zinc finger spans residues 854–877; that stretch reads AACPYCPPNGPVRGDLLEHFRLAH. The interval 889–971 is disordered; the sequence is GVEARTPADR…KGTPAPLPNG (83 aa). Phosphoserine occurs at positions 901, 909, 914, and 935. Pro residues predominate over residues 925–950; the sequence is PQEPPPGPPPSPAAAPEAVPPPPAPP. A CCHC FOG-type 5 zinc finger spans residues 968-1001; that stretch reads LPNGNHRYCRLCNIKFSSLSTFIAHKKYYCSSHA. Positions 976, 979, 992, and 997 each coordinate Zn(2+).

This sequence belongs to the FOG (Friend of GATA) family. Interacts with corepressor CTBP2; this interaction is however not essential for corepressor activity. Interacts with the N-terminal zinc-finger of GATA1, GATA2 and probably GATA3. As to expression, mainly expressed in hematopoietic tissues. Also expressed in adult cerebellum, stomach, lymph node, liver and pancreas. Expressed in fetal heart, liver and spleen.

Its subcellular location is the nucleus. Functionally, transcription regulator that plays an essential role in erythroid and megakaryocytic cell differentiation. Essential cofactor that acts via the formation of a heterodimer with transcription factors of the GATA family GATA1, GATA2 and GATA3. Such heterodimer can both activate or repress transcriptional activity, depending on the cell and promoter context. The heterodimer formed with GATA proteins is essential to activate expression of genes such as NFE2, ITGA2B, alpha- and beta-globin, while it represses expression of KLF1. May be involved in regulation of some genes in gonads. May also be involved in cardiac development, in a non-redundant way with ZFPM2/FOG2. The chain is Zinc finger protein ZFPM1 (ZFPM1) from Homo sapiens (Human).